Consider the following 699-residue polypeptide: Elongation factor G 1 (699 aa).

Residues 8–290 (ERYRNIGICA…AVIEYLPSPT (283 aa)) enclose the tr-type G domain. Residues 17–24 (AHVDAGKT), 88–92 (DTPGH), and 142–145 (NKMD) contribute to the GTP site.

The protein belongs to the TRAFAC class translation factor GTPase superfamily. Classic translation factor GTPase family. EF-G/EF-2 subfamily.

Its subcellular location is the cytoplasm. Functionally, catalyzes the GTP-dependent ribosomal translocation step during translation elongation. During this step, the ribosome changes from the pre-translocational (PRE) to the post-translocational (POST) state as the newly formed A-site-bound peptidyl-tRNA and P-site-bound deacylated tRNA move to the P and E sites, respectively. Catalyzes the coordinated movement of the two tRNA molecules, the mRNA and conformational changes in the ribosome. In Hahella chejuensis (strain KCTC 2396), this protein is Elongation factor G 1.